Here is a 220-residue protein sequence, read N- to C-terminus: MRVSRFNPRNRGFTLIELMIVVAIIGILAAIAIPNFIKFQARSKQSEAKTNLKALYTAQKSFFSEKDRYSDFANEIGFAPERGNRYGYRVSAAAGDCEVRNAADLPVPAAGVPCISNDSFRFGANSAIDDPTPVVARFVPQGAAGWNTTLGVQPTIADCPNCNFFAGARGNADNEATFDDWVIAGFEGSGQVGPCSEAGNVASGTPYNTRNDVACDGAAQ.

The propeptide at 1-12 (MRVSRFNPRNRG) is leader sequence. F13 is modified (N-methylphenylalanine). Residues 13–33 (FTLIELMIVVAIIGILAAIAI) traverse the membrane as a helical segment.

Belongs to the N-Me-Phe pilin family.

Its subcellular location is the fimbrium. It is found in the membrane. Its activity is regulated as follows. The two-component PilS2/PilR2 is required for proper assembly of T4P and regulation. Its function is as follows. Major component of the type IV pili that are required for social gliding motility through cycles of extension and retraction. Extended pili are composed of thousands of copies of PilA and retract upon binding to extracellular polysaccharides and thereby pull the cell forward. The polypeptide is Type IV major pilin protein PilA (pilA) (Myxococcus xanthus (strain DK1622)).